The sequence spans 274 residues: Large ribosomal subunit protein uL2 (274 aa).

Disordered regions lie at residues 34–54 and 224–261; these read LEKK…TRHI and VAMN…KTRA.

Belongs to the universal ribosomal protein uL2 family. In terms of assembly, part of the 50S ribosomal subunit. Forms a bridge to the 30S subunit in the 70S ribosome.

Its function is as follows. One of the primary rRNA binding proteins. Required for association of the 30S and 50S subunits to form the 70S ribosome, for tRNA binding and peptide bond formation. It has been suggested to have peptidyltransferase activity; this is somewhat controversial. Makes several contacts with the 16S rRNA in the 70S ribosome. The polypeptide is Large ribosomal subunit protein uL2 (Ectopseudomonas mendocina (strain ymp) (Pseudomonas mendocina)).